The primary structure comprises 311 residues: Apolipoprotein E (311 aa).

The signal sequence occupies residues 1 to 18 (MKALWAVLLVTLLTGCLA). 8 repeat units span residues 72 to 93 (ALME…EQLG), 94 to 115 (PVAE…ARLG), 116 to 137 (ADME…TMLG), 138 to 159 (QSTE…KRLM), 160 to 181 (RDAE…EGAE), 182 to 203 (RGVS…QRTA), 204 to 225 (NLGA…DRIR), and 226 to 247 (GRLE…EHME). The 8 X 22 AA approximate tandem repeats stretch occupies residues 72–247 (ALMEDTMTEV…RLEEVREHME (176 aa)). A Methionine sulfoxide modification is found at methionine 135. Serine 139 is modified (phosphoserine). Residues 150 to 160 (HLRKMRKRLMR) are LDL and other lipoprotein receptors binding. 154-157 (MRKR) contacts heparin. Residues 202 to 282 (TANLGAGAAQ…GWFEPIVEDM (81 aa)) form a lipid-binding and lipoprotein association region. A heparin-binding site is contributed by 221-228 (GDRIRGRL). The homooligomerization stretch occupies residues 258–311 (QQIRLQAEIFQARLKGWFEPIVEDMHRQWANLMEKIQASVATNPIITPVAQENQ). Positions 270–282 (RLKGWFEPIVEDM) are specificity for association with VLDL.

The protein belongs to the apolipoprotein A1/A4/E family. Homotetramer. May interact with ABCA1; functionally associated with ABCA1 in the biogenesis of HDLs. May interact with APP/A4 amyloid-beta peptide; the interaction is extremely stable in vitro but its physiological significance is unclear. May interact with MAPT. May interact with MAP2. In the cerebrospinal fluid, interacts with secreted SORL1. Interacts with PMEL; this allows the loading of PMEL luminal fragment on ILVs to induce fibril nucleation. Post-translationally, APOE exists as multiple glycosylated and sialylated glycoforms within cells and in plasma. The extent of glycosylation and sialylation are tissue and context specific. Glycated in plasma VLDL. In terms of processing, phosphorylated by FAM20C in the extracellular medium.

It is found in the secreted. The protein localises to the extracellular space. Its subcellular location is the extracellular matrix. The protein resides in the extracellular vesicle. It localises to the endosome. It is found in the multivesicular body. APOE is an apolipoprotein, a protein associating with lipid particles, that mainly functions in lipoprotein-mediated lipid transport between organs via the plasma and interstitial fluids. APOE is a core component of plasma lipoproteins and is involved in their production, conversion and clearance. Apolipoproteins are amphipathic molecules that interact both with lipids of the lipoprotein particle core and the aqueous environment of the plasma. As such, APOE associates with chylomicrons, chylomicron remnants, very low density lipoproteins (VLDL) and intermediate density lipoproteins (IDL) but shows a preferential binding to high-density lipoproteins (HDL). It also binds a wide range of cellular receptors including the LDL receptor/LDLR and the very low-density lipoprotein receptor/VLDLR that mediate the cellular uptake of the APOE-containing lipoprotein particles. Finally, APOE also has a heparin-binding activity and binds heparan-sulfate proteoglycans on the surface of cells, a property that supports the capture and the receptor-mediated uptake of APOE-containing lipoproteins by cells. This chain is Apolipoprotein E (Apoe), found in Mus musculus (Mouse).